We begin with the raw amino-acid sequence, 276 residues long: Large ribosomal subunit protein uL2 (276 aa).

A disordered region spans residues 212–276; that stretch reads NRHRGIRPQT…KLIISRKKHK (65 aa). Over residues 257–276 the composition is skewed to basic residues; it reads YKTRKKKASDKLIISRKKHK.

This sequence belongs to the universal ribosomal protein uL2 family. In terms of assembly, part of the 50S ribosomal subunit. Forms a bridge to the 30S subunit in the 70S ribosome.

In terms of biological role, one of the primary rRNA binding proteins. Required for association of the 30S and 50S subunits to form the 70S ribosome, for tRNA binding and peptide bond formation. It has been suggested to have peptidyltransferase activity; this is somewhat controversial. Makes several contacts with the 16S rRNA in the 70S ribosome. The protein is Large ribosomal subunit protein uL2 of Helicobacter pylori (strain P12).